The chain runs to 623 residues: Chaperone protein HtpG (623 aa).

The segment at 1–328 (MTQEKKKFDA…SEDLPLNISR (328 aa)) is a; substrate-binding. A b region spans residues 329-544 (ESLQHNSILD…ESAMDIRMER (216 aa)). The tract at residues 545 to 623 (FLIEQKQIAN…DIVQKAILSL (79 aa)) is c.

It belongs to the heat shock protein 90 family. In terms of assembly, homodimer.

The protein resides in the cytoplasm. Its function is as follows. Molecular chaperone. Has ATPase activity. The polypeptide is Chaperone protein HtpG (Rickettsia canadensis (strain McKiel)).